A 392-amino-acid chain; its full sequence is 3-ketoacyl-CoA thiolase (392 aa).

The active-site Acyl-thioester intermediate is the Cys95. Active-site proton acceptor residues include His347 and Cys377.

This sequence belongs to the thiolase-like superfamily. Thiolase family. As to quaternary structure, heterotetramer of two alpha chains (FadB) and two beta chains (FadA).

The protein localises to the cytoplasm. It carries out the reaction an acyl-CoA + acetyl-CoA = a 3-oxoacyl-CoA + CoA. It functions in the pathway lipid metabolism; fatty acid beta-oxidation. Functionally, catalyzes the final step of fatty acid oxidation in which acetyl-CoA is released and the CoA ester of a fatty acid two carbons shorter is formed. This chain is 3-ketoacyl-CoA thiolase, found in Chromohalobacter salexigens (strain ATCC BAA-138 / DSM 3043 / CIP 106854 / NCIMB 13768 / 1H11).